A 1155-amino-acid polypeptide reads, in one-letter code: DNA-directed RNA polymerase subunit beta (1155 aa).

Belongs to the RNA polymerase beta chain family. The RNAP catalytic core consists of 2 alpha, 1 beta, 1 beta' and 1 omega subunit. When a sigma factor is associated with the core the holoenzyme is formed, which can initiate transcription.

The catalysed reaction is RNA(n) + a ribonucleoside 5'-triphosphate = RNA(n+1) + diphosphate. In terms of biological role, DNA-dependent RNA polymerase catalyzes the transcription of DNA into RNA using the four ribonucleoside triphosphates as substrates. The chain is DNA-directed RNA polymerase subunit beta from Borrelia hermsii (strain HS1 / DAH).